The chain runs to 335 residues: DNA-directed RNA polymerase subunit alpha (335 aa).

An alpha N-terminal domain (alpha-NTD) region spans residues 1–231; sequence MVREKVTVST…DLFIPFLHME (231 aa). The alpha C-terminal domain (alpha-CTD) stretch occupies residues 262–335; it reads KKKLSLESIF…FALDLPKNLN (74 aa).

Belongs to the RNA polymerase alpha chain family. In terms of assembly, in plastids the minimal PEP RNA polymerase catalytic core is composed of four subunits: alpha, beta, beta', and beta''. When a (nuclear-encoded) sigma factor is associated with the core the holoenzyme is formed, which can initiate transcription.

The protein resides in the plastid. It carries out the reaction RNA(n) + a ribonucleoside 5'-triphosphate = RNA(n+1) + diphosphate. Its function is as follows. DNA-dependent RNA polymerase catalyzes the transcription of DNA into RNA using the four ribonucleoside triphosphates as substrates. This is DNA-directed RNA polymerase subunit alpha from Cuscuta reflexa (Southern Asian dodder).